Here is a 157-residue protein sequence, read N- to C-terminus: Thioredoxin 2 (157 aa).

Residues 1 to 23 (MKKYIFFFLFSFINFFFVYDVTC) form the signal peptide. One can recognise a Thioredoxin domain in the interval 46–157 (LRMFKKVPRL…DLIALIKKHL (112 aa)). Residues Cys82 and Cys85 each act as nucleophile in the active site. An intrachain disulfide couples Cys82 to Cys85.

Belongs to the thioredoxin family. Monomer. Component of the Plasmodium translocon of exported proteins (PTEX) complex composed of HSP101, EXP2, PTEX150, PTEX88 and TRX2. Post-translationally, the disulfide bond between Cys-82 and Cys-85 acts as a redox-active center and is reduced by thioredoxin reductase TRXR.

It is found in the parasitophorous vacuole membrane. Participates in various redox reactions through the reversible oxidation of its active center dithiol to a disulfide and catalyzes dithiol-disulfide exchange reactions. As part of the translocon PTEX complex, plays a role in the export of parasite proteins into the host erythrocyte. The translocon PTEX complex is a multi-protein machinery resident in the parasite parasitophorous vacuolar membrane, responsible for protein secretion into host cells. May contribute to the unfolding of proteins containing the PEXEL localization motif before their passage through the translocon or regulate the PTEX complex function. The protein is Thioredoxin 2 of Plasmodium falciparum (isolate 3D7).